Here is a 150-residue protein sequence, read N- to C-terminus: Ribonuclease H (150 aa).

Positions 1 to 141 (MRPVIIHTDG…ADQLARDGLT (141 aa)) constitute an RNase H type-1 domain. 4 residues coordinate Mg(2+): Asp-9, Glu-47, Asp-69, and Asp-133.

Belongs to the RNase H family. Monomer. It depends on Mg(2+) as a cofactor.

It localises to the cytoplasm. The catalysed reaction is Endonucleolytic cleavage to 5'-phosphomonoester.. In terms of biological role, endonuclease that specifically degrades the RNA of RNA-DNA hybrids. The chain is Ribonuclease H from Rhodopseudomonas palustris (strain BisB5).